We begin with the raw amino-acid sequence, 344 residues long: Melanocyte-stimulating hormone receptor (344 aa).

Residues 1-37 (MPMQGAQRKLLGSLNSTPTATSNLGLAANHTGAPCLE) lie on the Extracellular side of the membrane. Asn29 carries an N-linked (GlcNAc...) asparagine glycan. A helical membrane pass occupies residues 38–63 (VPIPDGLFLSLGLVSLVENVLVVAAI). Topologically, residues 64 to 72 (AKNRNLHSS) are cytoplasmic. Residues 73 to 93 (MYCFICCLAVSDLLVSGSNML) traverse the membrane as a helical segment. The Extracellular segment spans residues 94-118 (ETAIILLLEAGALVTRASVVQQLHN). A helical transmembrane segment spans residues 119-140 (TIDVLTCSSMLCSLCFLGAIAV). Over 141 to 163 (DRYISIFYALRYHSIMTLPRAQR) the chain is Cytoplasmic. The chain crosses the membrane as a helical span at residues 164-183 (AIAAIWVASVLSSTLFITYY). At 184 to 191 (DHAAVLLC) the chain is on the extracellular side. A helical transmembrane segment spans residues 192 to 211 (LVVFFLAMLVLMAVLYVHML). The Cytoplasmic segment spans residues 212–240 (ARACQHAQGIIRLHKRQPPAHKGFGLRGA). A helical membrane pass occupies residues 241 to 266 (ATLTILLGIFFLCWGPFFLHLTLVVF). Topologically, residues 267–279 (CPQHMTCSCIFKN) are extracellular. A helical transmembrane segment spans residues 280 to 300 (FKVFLTLIICNTIIDPLIYAF). The Cytoplasmic portion of the chain corresponds to 301-344 (RSQELRRTLKEVLLCSRWPGCWAEGGGDSVWPGSCVTLRGPLPP). Cys315 carries the S-palmitoyl cysteine lipid modification.

Belongs to the G-protein coupled receptor 1 family. Interacts with MGRN1, but does not undergo MGRN1-mediated ubiquitination; this interaction competes with GNAS-binding and thus inhibits agonist-induced cAMP production. Interacts with OPN3; the interaction results in a decrease in MC1R-mediated cAMP signaling and ultimately a decrease in melanin production in melanocytes.

It localises to the cell membrane. In terms of biological role, receptor for MSH (alpha, beta and gamma) and ACTH. The activity of this receptor is mediated by G proteins which activate adenylate cyclase. Mediates melanogenesis, the production of eumelanin (black/brown) and phaeomelanin (red/yellow), via regulation of cAMP signaling in melanocytes. The protein is Melanocyte-stimulating hormone receptor (MC1R) of Callimico goeldii (Goeldi's marmoset).